The primary structure comprises 296 residues: Small ribosomal subunit biogenesis GTPase RsgA (296 aa).

The 159-residue stretch at Ile65–Ile223 folds into the CP-type G domain. GTP contacts are provided by residues Ser114–Asp117 and Gly166–Thr174. Zn(2+) contacts are provided by Cys247, Cys252, His254, and Cys260.

Belongs to the TRAFAC class YlqF/YawG GTPase family. RsgA subfamily. In terms of assembly, monomer. Associates with 30S ribosomal subunit, binds 16S rRNA. Requires Zn(2+) as cofactor.

Its subcellular location is the cytoplasm. In terms of biological role, one of several proteins that assist in the late maturation steps of the functional core of the 30S ribosomal subunit. Helps release RbfA from mature subunits. May play a role in the assembly of ribosomal proteins into the subunit. Circularly permuted GTPase that catalyzes slow GTP hydrolysis, GTPase activity is stimulated by the 30S ribosomal subunit. This chain is Small ribosomal subunit biogenesis GTPase RsgA, found in Lactobacillus acidophilus (strain ATCC 700396 / NCK56 / N2 / NCFM).